The sequence spans 406 residues: MVHCAGCKRPILDRFLLNVLDRAWHVKCVQCCECKCNLTEKCFSREGKLYCKNDFFRCFGTKCAGCAQGISPSDLVRRARSKVFHLNCFTCMMCNKQLSTGEELYIIDENKFVCKEDYLSNSSVAKENSLHSATTGSDPSLSPDSQDPSQDDAKDSESANVSDKEAGSNENDDQNLGAKRRGPRTTIKAKQLETLKAAFAATPKPTRHIREQLAQETGLNMRVIQVWFQNRRSKERRMKQLSALGARRHAFFRSPRRMRPLVDRLEPGELIPNGPFSFYGDYQSEYYGPGGNYDFFPQGPPSSQAQTPVDLPFVPSSGPSGTPLGGLEHPLPGHHPSSEAQRFTDILAHPPGDSPSPEPSLPGPLHSMSAEVFGPSPPFSSLSVNGGASYGNHLSHPPEMNEAAVW.

LIM zinc-binding domains follow at residues 4-54 and 63-117; these read CAGC…CKND and CAGC…CKED. 2 disordered regions span residues 128-187 and 293-374; these read NSLH…RTTI and YDFF…EVFG. Over residues 137 to 148 the composition is skewed to low complexity; the sequence is SDPSLSPDSQDP. Over residues 151–167 the composition is skewed to basic and acidic residues; that stretch reads DDAKDSESANVSDKEAG. Phosphoserine is present on Ser-162. A DNA-binding region (homeobox) is located at residues 180–239; that stretch reads RRGPRTTIKAKQLETLKAAFAATPKPTRHIREQLAQETGLNMRVIQVWFQNRRSKERRMK. Residues 315–327 show a composition bias toward low complexity; that stretch reads PSSGPSGTPLGGL. The segment covering 352-362 has biased composition (pro residues); the sequence is GDSPSPEPSLP.

As to quaternary structure, interacts with LDB1 via the tandem LIM domains. In terms of tissue distribution, expressed in the brain, thymus, and tonsils. Expressed in samples from patients with chronic myeloid leukemia (CML) and in 58% of acute myeloid leukemia (AML) cell lines.

It is found in the nucleus. Functionally, potential transcription factor. May play a role in early mesoderm formation and later in lateral mesoderm differentiation and neurogenesis. This Homo sapiens (Human) protein is LIM/homeobox protein Lhx1 (LHX1).